The chain runs to 288 residues: Probable chromosome 1-partitioning protein ParB (288 aa).

The protein belongs to the ParB family.

Involved in chromosome partition. Localize to both poles of the predivisional cell following completion of DNA replication. Binds to the DNA origin of replication. The sequence is that of Probable chromosome 1-partitioning protein ParB (parB1) from Deinococcus radiodurans (strain ATCC 13939 / DSM 20539 / JCM 16871 / CCUG 27074 / LMG 4051 / NBRC 15346 / NCIMB 9279 / VKM B-1422 / R1).